The chain runs to 324 residues: tRNA pseudouridine synthase B (324 aa).

Catalysis depends on Asp-49, which acts as the Nucleophile. Positions Arg-87–Glu-107 are disordered.

It belongs to the pseudouridine synthase TruB family. Type 1 subfamily.

It carries out the reaction uridine(55) in tRNA = pseudouridine(55) in tRNA. Responsible for synthesis of pseudouridine from uracil-55 in the psi GC loop of transfer RNAs. The chain is tRNA pseudouridine synthase B from Brucella canis (strain ATCC 23365 / NCTC 10854 / RM-666).